A 2590-amino-acid chain; its full sequence is MTPTLLLCGSQAIQWSEDYLSSLREMLLADSALQPLVHAIRDLPQLWATLLEADTALHKMPGKQTLDRFTRWLDGERLLEKDSPSDLNMIMSPLTVIMQLVEYISHLHQSNLTHLQILDGAKHGGIQGFCTGFLAAITLSISRDESDVAELGTVALRLATCIGAYVDLDQCNSSGFACLAVRWPTAADERKVKDILETYNGAYLSVRSDVASATLTVPRAAKSSIIDELSNIGAHVKDIPLSGRFHNQVNRELFAKLAALCKSTIGLQFPGHCRPLVPLRSNADGELLSGNEALHVAALNSLLLHVSDWHKTVSKAMDSLSQTTAEPEVSVLGLGDCIPRTIRQSRALHVSHIKTGSTQSHDDPYQYPGDSIAIVGMGCRFPGADSLEEYWKVIESATSMLGDLPEGRFPKTNLRRDPNGKIPLNGNFLRHPDLWDHRFFKRSSREAASMDPQHRLALEVAYEALESAGYFAQRSPAKDIGCYMGVAASDYEDNVASHAPTAFSVLGMVRAFTSGKISHFFGLSGPSLVFDTACSSSLVAIHTACRALQANECSMALAGGVNVITSPTLHQNLGAANFLSPTGGSKSFDDRADGYCRGEGAGIVLLKRLDRAIAEKDRILGVIAGSAVNQNDNAYPVTVPVSMSQTALYRRVLDMSGLSPRPVSYVEAHGTGTPKGDPIECASIREVFGGQVNRKLYFGSVKANIGHAEAASGVAGLIKVLLMMQKRSIPPQALFASLNKSIPPLEPDNMAIAQRVTPWSEEFYAACVNNYGAAGSNAALIVTQPPNIRRGSHAGVALKNCPILLSANTAGSLRQTTVVLREFLAHNRAISENDLLKSTAFHLAKRFNPSFKYRHSFSVASLNQLDEKLQICSQLPDSEFLLPPNHRPVVLAFGGQTGNVVHLSEGVYRGSSILRKYLDKCDMQLRQLGLTSIFPTIFEQKSIEDTIQLHCTMFSLQYASAMAWIAAGLQVQTVIGHSFGQLTAMCVAGVLSLVDAIRLIAGRATIIQEKWGAERGCMLLVQGELALVQKLISQAREATSHVVEIACFNGPNSFVLVGSEADIDAFDGLAASSLKTRKMAVTHGFHSRFVDTIMDDYQKLADSLEYKSPTIAIETCSSGETWDMFTADKVAKQSRQPVYFAEAVERIAQRLGSCTWIEAGSGSGITSMARRALNDTTNHDFHAVNLGGPEPWAAFADTTVSLWQAGVQVDYWPFHKEQQLEYLPLNLPPYQFERSRHWLAYVDRPGADGLIQSKETQSVETKPKLVSFVKYLDSNRQTAEFSIGQDCEQYQALVRGHAVLANTLCPAALYVEMAAYAASLLVPDFSPSTYTSRVEDLHMQSPLAIDLKRGLRLVLSSSGSGTWQFIMQSFSLSDSDNATQHASGTVNISSLTSEKLQSRFSRYKRIVNYERCESLLSDSGTSAIQGSLVYKMFDKVVVYSDIFRGVSKIASRGHEVTGQVSLPSAGLELVKDSVCNPLVVDNFTQVAGLHVNSLDDCGSNEVYLCNGIEQIDACKPLDASGSWLVHSSFDRVGTRELVNDIFVFDASTKELVMTLFGLRFAKVPTASLKRALERANTVQNPVQTPSLKVTEPSANVPKAQPVSTYPKPMKPAPAADAQIRTATMALLNEVADVPLSDIADGAQLEDLGIDSLMAAELLSAIRERFNLDIPTSTFASIVDFKGLYQHIASGTDAGILTPSSSGMESDDSILEVQYTDTSTPFSEIAYPLEDKDAGDSAQAGQIAQLSQLFAEHLECPLPIPSGETLRDIGLDSLVGMELAADIQQAFGRKVDLATLDPECTFGQFCDMVIPKPTLSVPTVSEKVDKTVRWASTEIAYTAKRENKMQDPVEMQSDGGNVNYLAHCAEDFAQIRKNYTTFAKQTGFADFRANVYPQQKELVCAYVTEAFAALGSDLKTIPSGSPLPPIQHIARHAKVMKQYYKVLEDSGLITITDNGPIRTAKPVSPVKSEDLYQMIYSAFPQHRGEHKLLNSTGSKLASCLKGETDPLQILFGSKASKDLMEDVYTNSPMFATGTRILGDFFVKTFSKYKGPEKLRILELGAGTGGTTKYIVEKLLEHNIPFTYTFTDLSPSLVALAKRKFSHYGCLEFLVLDIEKTPPEHLTNSYHAILSSNCVHATKNLLNSTTNTRKLLRADGFLCLLELTRNLFWLDCVFGLLEGWWLFEDGRKHVLADEYLWKETLLEAGFRHVDWSDDDTEESDQFRVITGFVADIGHNALDQAKPVTTKLPTMETTSFATVDGIPLLADIYYPTKPDAPGVKRPIALMIHGGGHIMLSRRDIRPKQTRLLLERGLLPVSIEYRLCPEVSLTEGPIPDACAALNWVRTVLPTLRLQRPDIHPNGDKVAVVGWSTGGTLSMMLAFSAPQRGIRPPDAILAFYCPTDYEAEFFRTPNYPEDTSEVVPEIYDILEGVQERPITAYNVPAHQGATGGWMSLSDPRSRIALHMNWRGQMMPVLLDGLPSKKTLLEAGGDASPSKWMDLPQPSVDRLRAVSPYAQIVQGNYRVPTFLVHGTRDDLIPWEQSVRTKDALTSQGVAAGVAVVDDAVHLFDLYRDPEGRYWNAVLEGYEFLLRHL.

Residues 6-255 form an N-terminal acylcarrier protein transacylase domain (SAT) region; the sequence is LLCGSQAIQW…HNQVNRELFA (250 aa). The region spanning 369-784 is the Ketosynthase family 3 (KS3) domain; that stretch reads GDSIAIVGMG…GSNAALIVTQ (416 aa). Catalysis depends on for beta-ketoacyl synthase activity residues Cys534, His669, and His707. The interval 891-1191 is malonyl-CoA:ACP transacylase (MAT) domain; that stretch reads LAFGGQTGNV…HAVNLGGPEP (301 aa). The active-site For acyl/malonyl transferase activity is Ser978. The N-terminal hotdog fold stretch occupies residues 1263-1393; sequence PKLVSFVKYL…GTVNISSLTS (131 aa). One can recognise a PKS/mFAS DH domain in the interval 1263 to 1569; it reads PKLVSFVKYL…FAKVPTASLK (307 aa). The product template (PT) domain stretch occupies residues 1267–1568; it reads SFVKYLDSNR…RFAKVPTASL (302 aa). His1297 (proton acceptor; for dehydratase activity) is an active-site residue. The interval 1421–1569 is C-terminal hotdog fold; sequence TSAIQGSLVY…FAKVPTASLK (149 aa). Asp1481 acts as the Proton donor; for dehydratase activity in catalysis. The interval 1587–1612 is disordered; it reads LKVTEPSANVPKAQPVSTYPKPMKPA. Carrier domains are found at residues 1617 to 1691 and 1736 to 1812; these read AQIR…ASGT and SAQA…IPKP. Residues Ser1651 and Ser1772 each carry the O-(pantetheine 4'-phosphoryl)serine modification. The tract at residues 1980-2212 is methyltransferase (CMeT) domain; that stretch reads QHRGEHKLLN…GFRHVDWSDD (233 aa). The tract at residues 2282 to 2590 is thioesterase (TE) domain; that stretch reads LMIHGGGHIM…EGYEFLLRHL (309 aa).

It catalyses the reaction 3 malonyl-CoA + acetyl-CoA + S-adenosyl-L-methionine + H(+) = 5-methylorsellinate + S-adenosyl-L-homocysteine + 3 CO2 + 4 CoA. It participates in secondary metabolite biosynthesis. In terms of biological role, non-reducing polyketide synthase; part of the cluster A that mediates the biosynthesis of azasperpyranones, members of the azaphilone family that exhibit anti-cancer activities. Azasperpyranones are synthesized by 2 clusters, A and B. Cluster A is responsible for the production of the polyhydric phenol moiety while the azaphilonoid scaffold is produced by the cluster B. The non-reducing polyketide synthase ATEG_03629 produces 5-methyl orsellinic acid, which is then reduced to 5-methyl orsellinic aldehyde by the NRPS-like protein ATEG_03630. 5-methyl orsellinic aldehyde is then first hydroxylated by the FAD-dependent monooxygenase ATEG_03635 and subsequently hydroxylated by the cytochrome P450 monooxygenase ATEG_03631 to produce the unstable polyhydric phenol precursor of azasperpyranones. On the other hand, the polyketide synthase ATEG_07659 is responsible for producing the 3,5-dimethyloctadienone moiety from acetyl-CoA, three malonyl-CoA, and two S-adenosyl methionines (SAM). The 3,5-dimethyloctadienone moiety is then loaded onto the SAT domain of ATEG_07661 and extended with four malonyl-CoA and one SAM, which leads to the formation of 2,4-dihydroxy-6-(5,7-dimethyl-2-oxo-trans-3-trans-5-nonadienyl)-3-methylbenzaldehyde (compound 8) after reductive release and aldol condensation. The FAD-dependent monooxygenase ATEG_07662 is the next enzyme in the biosynthesis sequence and hydroxylates the side chain at the benzylic position of compound 8. In Aspergillus nidulans, afoF, the ortholog of the FAD-dependent oxygenase ATEG_07660, is the key enzyme for the biosynthesis of asperfuranone by catalyzing the hydroxylation at C-8 of to prevent the formation of a six-membered ring hemiacetal intermediate and thus facilitating the formation of a five-membered ring to produce asperfuranone. In Aspergillus terreus, ATEG_07660 is probably not functional, which leads to the formation of the six-membered ring hemiacetal intermediate presperpyranone instead of asperfuranone. Finally, ATEG_03636 is involved in the condensation of the polyhydric phenol moiety produced by cluster A and the perasperpyranone precursor produced by cluster B, to yield azasperpyranone A. Further modifications of azasperpyranone A result in the production of derivatives, including azasperpyranone B to F. This chain is 5-methylorsellinic acid synthase, found in Aspergillus terreus (strain NIH 2624 / FGSC A1156).